The primary structure comprises 199 residues: Gamma-glutamylcyclotransferase 2-3 (199 aa).

5 to 10 (VFGYGS) lines the substrate pocket. Catalysis depends on Glu-86, which acts as the Proton acceptor.

The protein belongs to the gamma-glutamylcyclotransferase family. It depends on Mn(2+) as a cofactor.

It is found in the cytoplasm. It carries out the reaction glutathione = L-cysteinylglycine + 5-oxo-L-proline. Functionally, converts GSH to 5-oxoproline and cysteine-glycine (Cys-Gly) dipeptide in vitro and plays a significant role in glutathione (GSH) homeostasis. Has no activity towards gamma-glutamyl-L-cysteine but possesses very low activity towards gamma-glutamyl-L-alanine. This is Gamma-glutamylcyclotransferase 2-3 from Arabidopsis thaliana (Mouse-ear cress).